The primary structure comprises 1360 residues: DNA-directed RNA polymerase subunit beta (1360 aa).

This sequence belongs to the RNA polymerase beta chain family. The RNAP catalytic core consists of 2 alpha, 1 beta, 1 beta' and 1 omega subunit. When a sigma factor is associated with the core the holoenzyme is formed, which can initiate transcription.

The enzyme catalyses RNA(n) + a ribonucleoside 5'-triphosphate = RNA(n+1) + diphosphate. Functionally, DNA-dependent RNA polymerase catalyzes the transcription of DNA into RNA using the four ribonucleoside triphosphates as substrates. The protein is DNA-directed RNA polymerase subunit beta of Caulobacter sp. (strain K31).